The following is a 430-amino-acid chain: C-terminal-binding protein 1 (430 aa).

The interaction with GLIS2 1 stretch occupies residues methionine 1–alanine 59. Residues serine 89, isoleucine 169–valine 174, aspartate 193, cysteine 226–asparagine 232, threonine 253–arginine 255, and aspartate 279 each bind NAD(+). The active site involves arginine 255. Residues alanine 277 to threonine 349 form an interaction with GLIS2 2 region. Residue glutamate 284 is part of the active site. Residue serine 289 is modified to Phosphoserine. Residue histidine 304 is the Proton donor of the active site. The interval serine 398 to leucine 430 is disordered. At serine 412 the chain carries Phosphoserine. A Glycyl lysine isopeptide (Lys-Gly) (interchain with G-Cter in SUMO) cross-link involves residue lysine 418. Residues proline 419–leucine 430 are compositionally biased toward basic and acidic residues.

Belongs to the D-isomer specific 2-hydroxyacid dehydrogenase family. In terms of assembly, homo- or heterodimer. Heterodimer with CTBP2. Interacts with ELK3 (via its PXDLS motif). Interacts with RBBP8 (via its PXDLS motif); the interaction is disrupted by binding to adenovirus E1A. Interacts with PNN, MECOM and ZFHX1B. Interacts with ZNF366 (via PXDLS motif). Interaction with SATB1 (non-acetylated form); the interaction stabilizes its attachment to DNA and promotes transcription repression. Interacts with PRDM16; the interaction represses white adipose tissue (WAT)-specific genes expression. Interacts with GLIS2, HIPK2, FOXP1, FOXP2, HDAC4, HDAC5, HDAC9, NRIP1 and WIZ. Interacts with ZNF217. Interacts with BCL6; the interaction is required for BCL6 transcriptional autoinhibition and inhibition of some BCL6 target genes. Interacts with IKZF4. Interacts with MCRIP1 (unphosphorylated form, via the PXDLS motif); competitively inhibiting CTBP-ZEB1 interaction. Interacts with Bassoon/BSN; this interaction targets and anchors CTBP1 to presynapses. Interacts with SIMC1. Requires NAD(+) as cofactor. In terms of processing, the level of phosphorylation appears to be regulated during the cell cycle. Phosphorylation by HIPK2 on Ser-412 induces proteasomal degradation. ADP-ribosylated; when cells are exposed to brefeldin A. Post-translationally, sumoylation on Lys-418 is promoted by the E3 SUMO-protein ligase CBX4.

It localises to the cytoplasm. The protein localises to the nucleus. Its subcellular location is the synapse. It is found in the synaptosome. Its function is as follows. Corepressor targeting diverse transcription regulators such as GLIS2 or BCL6. Has dehydrogenase activity. Involved in controlling the equilibrium between tubular and stacked structures in the Golgi complex. Functions in brown adipose tissue (BAT) differentiation. This is C-terminal-binding protein 1 (Ctbp1) from Rattus norvegicus (Rat).